A 186-amino-acid chain; its full sequence is Protein GrpE (186 aa).

Residues 1-13 are compositionally biased toward polar residues; that stretch reads MSENTQPEQNQPL. Residues 1–22 form a disordered region; the sequence is MSENTQPEQNQPLTGAPSPEEL.

This sequence belongs to the GrpE family. In terms of assembly, homodimer.

Its subcellular location is the cytoplasm. Participates actively in the response to hyperosmotic and heat shock by preventing the aggregation of stress-denatured proteins, in association with DnaK and GrpE. It is the nucleotide exchange factor for DnaK and may function as a thermosensor. Unfolded proteins bind initially to DnaJ; upon interaction with the DnaJ-bound protein, DnaK hydrolyzes its bound ATP, resulting in the formation of a stable complex. GrpE releases ADP from DnaK; ATP binding to DnaK triggers the release of the substrate protein, thus completing the reaction cycle. Several rounds of ATP-dependent interactions between DnaJ, DnaK and GrpE are required for fully efficient folding. The chain is Protein GrpE from Polaromonas sp. (strain JS666 / ATCC BAA-500).